A 174-amino-acid polypeptide reads, in one-letter code: Protein GrpE (174 aa).

Belongs to the GrpE family. In terms of assembly, homodimer.

It is found in the cytoplasm. In terms of biological role, participates actively in the response to hyperosmotic and heat shock by preventing the aggregation of stress-denatured proteins, in association with DnaK and GrpE. It is the nucleotide exchange factor for DnaK and may function as a thermosensor. Unfolded proteins bind initially to DnaJ; upon interaction with the DnaJ-bound protein, DnaK hydrolyzes its bound ATP, resulting in the formation of a stable complex. GrpE releases ADP from DnaK; ATP binding to DnaK triggers the release of the substrate protein, thus completing the reaction cycle. Several rounds of ATP-dependent interactions between DnaJ, DnaK and GrpE are required for fully efficient folding. This is Protein GrpE from Pseudothermotoga lettingae (strain ATCC BAA-301 / DSM 14385 / NBRC 107922 / TMO) (Thermotoga lettingae).